The sequence spans 263 residues: 7beta-hydroxysteroid dehydrogenase (263 aa).

NADP(+) contacts are provided by residues 17-21 (TEGVG), 40-41 (RR), and 66-67 (DF). Residue Tyr156 is the Proton acceptor of the active site. Ser240 contributes to the NADP(+) binding site.

The protein belongs to the short-chain dehydrogenases/reductases (SDR) family. In terms of assembly, homodimer.

It carries out the reaction a 7beta-hydroxysteroid + NADP(+) = a 7-oxosteroid + NADPH + H(+). The enzyme catalyses 7-oxolithocholate + NADPH + H(+) = ursodeoxycholate + NADP(+). The catalysed reaction is 7beta-hydroxy-3,12-dioxo-5beta-cholan-24-oate + NADP(+) = dehydrocholate + NADPH + H(+). It catalyses the reaction ursocholate + NADP(+) = 3alpha,12alpha-dihydroxy-7-oxo-5beta-cholanate + NADPH + H(+). Functionally, 7beta-hydroxysteroid dehydrogenase that catalyzes the reduction of the 7-oxo group of 7-oxo-lithocholate (7-oxo-LCA), to yield ursodeoxycholate (UDCA). As C.aerofaciens is an intestinal bacterium, this enzyme probably contributes to the formation of UDCA in the human colon. UDCA is regarded as a chemopreventive beneficial secondary bile acid due to its low hydrophobicity; it protects hepatocytes and bile duct epithelial cells against necrosis and apoptosis induced by more hydrophobic secondary bile acids like deoxycholate (DCA). This enzyme is also able to catalyze the reverse reaction, i.e. the oxidation of the 7beta-hydroxy group of UDCA to 7-oxo-LCA. To a lesser extent, is also active on the taurine- and glycine-conjugates of ursodeoxycholate. It is specific for NADPH/NADP(+) as the electron acceptor/donor since it is not active with NADH/NAD(+). In the presence of NADPH, 7beta-HSDH can also reduce dehydrocholate. And is also able to oxidize ursocholate. This is 7beta-hydroxysteroid dehydrogenase from Collinsella aerofaciens (strain ATCC 25986 / DSM 3979 / JCM 10188 / KCTC 3647 / NCTC 11838 / VPI 1003).